A 393-amino-acid chain; its full sequence is Mitogen-activated protein kinase SIPK (393 aa).

Residues 1–11 (MDGSGQQTDTM) show a composition bias toward polar residues. The segment at 1–31 (MDGSGQQTDTMMSDAGAEQPPPAPQPVAGMD) is disordered. The 286-residue stretch at 60-345 (KPPILPIGKG…VEGALAHPYL (286 aa)) folds into the Protein kinase domain. ATP contacts are provided by residues 66 to 74 (IGKGAYGIV) and K89. The active-site Proton acceptor is the D186. A TXY motif is present at residues 218–220 (TEY).

This sequence belongs to the protein kinase superfamily. CMGC Ser/Thr protein kinase family. MAP kinase subfamily. Interacts with SIPKK.

It carries out the reaction L-tyrosyl-[protein] + ATP = O-phospho-L-tyrosyl-[protein] + ADP + H(+). The catalysed reaction is L-seryl-[protein] + ATP = O-phospho-L-seryl-[protein] + ADP + H(+). It catalyses the reaction L-threonyl-[protein] + ATP = O-phospho-L-threonyl-[protein] + ADP + H(+). Activated by threonine and tyrosine phosphorylation. In terms of biological role, phosphorylates myelin basic protein (MBP) in vitro. May be involved in disease resistance. This chain is Mitogen-activated protein kinase SIPK, found in Nicotiana tabacum (Common tobacco).